A 388-amino-acid chain; its full sequence is Succinate--CoA ligase [ADP-forming] subunit beta (388 aa).

One can recognise an ATP-grasp domain in the interval 9–244; it reads KEIFARYGLP…PTQESELEVK (236 aa). ATP-binding positions include K46, 53 to 55, E99, T102, and E107; that span reads GRG. Mg(2+)-binding residues include N199 and D213. Substrate contacts are provided by residues N264 and 321–323; that span reads GIL.

This sequence belongs to the succinate/malate CoA ligase beta subunit family. As to quaternary structure, heterotetramer of two alpha and two beta subunits. Requires Mg(2+) as cofactor.

It catalyses the reaction succinate + ATP + CoA = succinyl-CoA + ADP + phosphate. The enzyme catalyses GTP + succinate + CoA = succinyl-CoA + GDP + phosphate. It functions in the pathway carbohydrate metabolism; tricarboxylic acid cycle; succinate from succinyl-CoA (ligase route): step 1/1. In terms of biological role, succinyl-CoA synthetase functions in the citric acid cycle (TCA), coupling the hydrolysis of succinyl-CoA to the synthesis of either ATP or GTP and thus represents the only step of substrate-level phosphorylation in the TCA. The beta subunit provides nucleotide specificity of the enzyme and binds the substrate succinate, while the binding sites for coenzyme A and phosphate are found in the alpha subunit. This chain is Succinate--CoA ligase [ADP-forming] subunit beta, found in Persephonella marina (strain DSM 14350 / EX-H1).